The following is a 557-amino-acid chain: Dihydroxy-acid dehydratase (557 aa).

Residue C50 participates in [2Fe-2S] cluster binding. Mg(2+) is bound at residue D82. C123 is a binding site for [2Fe-2S] cluster. Mg(2+) is bound by residues D124 and K125. K125 carries the N6-carboxylysine modification. C195 serves as a coordination point for [2Fe-2S] cluster. E447 serves as a coordination point for Mg(2+). S473 serves as the catalytic Proton acceptor.

This sequence belongs to the IlvD/Edd family. In terms of assembly, homodimer. Requires [2Fe-2S] cluster as cofactor. The cofactor is Mg(2+).

It carries out the reaction (2R)-2,3-dihydroxy-3-methylbutanoate = 3-methyl-2-oxobutanoate + H2O. The catalysed reaction is (2R,3R)-2,3-dihydroxy-3-methylpentanoate = (S)-3-methyl-2-oxopentanoate + H2O. It functions in the pathway amino-acid biosynthesis; L-isoleucine biosynthesis; L-isoleucine from 2-oxobutanoate: step 3/4. Its pathway is amino-acid biosynthesis; L-valine biosynthesis; L-valine from pyruvate: step 3/4. In terms of biological role, functions in the biosynthesis of branched-chain amino acids. Catalyzes the dehydration of (2R,3R)-2,3-dihydroxy-3-methylpentanoate (2,3-dihydroxy-3-methylvalerate) into 2-oxo-3-methylpentanoate (2-oxo-3-methylvalerate) and of (2R)-2,3-dihydroxy-3-methylbutanoate (2,3-dihydroxyisovalerate) into 2-oxo-3-methylbutanoate (2-oxoisovalerate), the penultimate precursor to L-isoleucine and L-valine, respectively. The protein is Dihydroxy-acid dehydratase of Burkholderia thailandensis (strain ATCC 700388 / DSM 13276 / CCUG 48851 / CIP 106301 / E264).